Consider the following 315-residue polypeptide: Methionyl-tRNA formyltransferase (315 aa).

Residue 113–116 coordinates (6S)-5,6,7,8-tetrahydrofolate; sequence SLLP.

The protein belongs to the Fmt family.

The enzyme catalyses L-methionyl-tRNA(fMet) + (6R)-10-formyltetrahydrofolate = N-formyl-L-methionyl-tRNA(fMet) + (6S)-5,6,7,8-tetrahydrofolate + H(+). Attaches a formyl group to the free amino group of methionyl-tRNA(fMet). The formyl group appears to play a dual role in the initiator identity of N-formylmethionyl-tRNA by promoting its recognition by IF2 and preventing the misappropriation of this tRNA by the elongation apparatus. The polypeptide is Methionyl-tRNA formyltransferase (Salmonella dublin (strain CT_02021853)).